We begin with the raw amino-acid sequence, 808 residues long: Phospholipase D alpha 1 (808 aa).

A propeptide spanning residues 1–30 (MAQISLHGTLHVTIYEVDKLHSGGGPHFFR) is cleaved from the precursor. Residues 1–125 (MAQISLHGTL…LDGEEIDRWV (125 aa)) enclose the C2 domain. Aspartate 186 is a binding site for Ca(2+). The PLD phosphodiesterase 1 domain occupies 326-364 (TMFTHHQKIVVVDSAMPNGDSQRRRIVSFVGGLDLCDGR). Active-site residues include histidine 331, lysine 333, and aspartate 338. Histidine 331 serves as a coordination point for a 1,2-diacyl-sn-glycero-3-phosphate. Ca(2+)-binding residues include histidine 370 and histidine 404. Positions 520 and 659 each coordinate a 1,2-diacyl-sn-glycero-3-phosphate. Residues 654–681 (FMIYVHTKMMIVDDEYIIIGSANINQRS) form the PLD phosphodiesterase 2 domain. Residues histidine 659, lysine 661, and aspartate 666 contribute to the active site. Glutamate 720 is a binding site for Ca(2+).

The protein belongs to the phospholipase D family. C2-PLD subfamily. It depends on Ca(2+) as a cofactor. Expression is higher in radicle than in endosperm.

The protein resides in the cytoplasm. It is found in the membrane. It localises to the vacuole. The protein localises to the endoplasmic reticulum. Its subcellular location is the plastid. The protein resides in the cell membrane. It carries out the reaction a 1,2-diacyl-sn-glycero-3-phosphocholine + H2O = a 1,2-diacyl-sn-glycero-3-phosphate + choline + H(+). In terms of biological role, hydrolyzes glycerol-phospholipids at the terminal phosphodiesteric bond. Plays an important role in various cellular processes, including phytohormone action, vesicular trafficking, secretion, cytoskeletal arrangement, meiosis, tumor promotion, pathogenesis, membrane deterioration and senescence. The protein is Phospholipase D alpha 1 (PLD1) of Ricinus communis (Castor bean).